The following is a 577-amino-acid chain: Arginine--tRNA ligase (577 aa).

A 'HIGH' region motif is present at residues 122–132; that stretch reads PNVAKEMHVGH.

It belongs to the class-I aminoacyl-tRNA synthetase family. Monomer.

The protein localises to the cytoplasm. The enzyme catalyses tRNA(Arg) + L-arginine + ATP = L-arginyl-tRNA(Arg) + AMP + diphosphate. The polypeptide is Arginine--tRNA ligase (Aliivibrio fischeri (strain ATCC 700601 / ES114) (Vibrio fischeri)).